The primary structure comprises 2413 residues: Pre-mRNA-splicing factor 8 (2413 aa).

Pro residues-rich tracts occupy residues 1 to 10 and 19 to 28; these read MSGLPPPPPG and LPPPPPPPPG. The segment at 1–60 is disordered; it reads MSGLPPPPPGFEEDSDLALPPPPPPPPGYEIEELDNPMVPSSVNEDTFLPPPPPPPSNFE. An SNU114/CWC21 interacting domain (SCwid) region spans residues 253–543; sequence QHIENIEPLD…LHPTLPTNHN (291 aa). Positions 885-1375 are reverse transcriptase homology domain; it reads VMVEWLESRS…RIQNRVKLGL (491 aa). The segment at 1376 to 1649 is linker; it reads NSKMPTRFPP…TLKISLIQIF (274 aa). Positions 1585–1598 are important for branch point selection; it reads MQFKKLTHAQRTGL. The segment at 1653 to 1824 is restriction endonuclease homology domain; that stretch reads LWQKIHESIV…LRERIRKGLQ (172 aa). The segment at 1839–2092 is RNase H homology domain; the sequence is NYAELFNNDI…ILGQNIKAPS (254 aa). The region spanning 2182-2311 is the MPN domain; sequence VYVLPKNLLK…LSAYNLTDEG (130 aa).

As to quaternary structure, component of the U4/U6-U5 tri-snRNP complex composed of the U4, U6 and U5 snRNAs and at least PRP3, PRP4, PRP6, PRP8, PRP18, PRP31, PRP38, SNU13, SNU23, SNU66, SNU114, SPP381, SMB1, SMD1, SMD2, SMD3, SMX2, SMX3, LSM2, LSM3, LSM4, LSM5, LSM6, LSM7, LSM8, BRR2 and DIB1. Belongs to the CWC complex (or CEF1-associated complex), a spliceosome sub-complex reminiscent of a late-stage spliceosome composed of the U2, U5 and U6 snRNAs and at least BUD13, BUD31, BRR2, CDC40, CEF1, CLF1, CUS1, CWC2, CWC15, CWC21, CWC22, CWC23, CWC24, CWC25, CWC27, ECM2, HSH155, IST3, ISY1, LEA1, MSL1, NTC20, PRP8, PRP9, PRP11, PRP19, PRP21, PRP22, PRP45, PRP46, SLU7, SMB1, SMD1, SMD2, SMD3, SMX2, SMX3, SNT309, SNU114, SPP2, SYF1, SYF2, RSE1 and YJU2. Interacts with PRP40 and SNP1. Interacts (via SCwid domain) with CWC21. Interacts (via SCwid domain) with SNU114 (via N-terminus). Interacts (via RNase H homology domain and MPN domain) with BRR2; this modulates BRR2 ATPase and helicase activity. Interacts (via RNase H homology domain) with AAR2. AAR2 and BRR2 compete for PRP8 binding, and during U5 snRNP maturation BRR2 displaces the initially bound AAR2. Is associated with snRNP U5, together with SNU114 and BRR2.

The protein resides in the nucleus. Functions as a scaffold that mediates the ordered assembly of spliceosomal proteins and snRNAs. Required for association of BRR2 with the spliceosomal U5 snRNP, and the subsequent assembly of the U4/U6-U5 tri-snRNP complex. Functions as a scaffold that positions spliceosomal U2, U5 and U6 snRNAs at splice sites on pre-mRNA substrates, so that splicing can occur. Interacts with both the 5' and the 3' splice site, as well as the branch region. Has a role in branch site-3' splice site selection. Associates with the branch site-3' splice 3'-exon region. Also has a role in cell cycle. This chain is Pre-mRNA-splicing factor 8 (PRP8), found in Saccharomyces cerevisiae (strain ATCC 204508 / S288c) (Baker's yeast).